The primary structure comprises 411 residues: Isocitrate dehydrogenase [NADP] peroxisomal (411 aa).

Residues 78–80 (TIT) and Arg85 contribute to the NADP(+) site. Thr80 serves as a coordination point for substrate. Substrate is bound by residues 97 to 103 (SPNGTLR), Arg112, and Arg135. Asp254 is a binding site for Mn(2+). Lys262 contacts NADP(+). Asp277 contacts Mn(2+). Residues 312-317 (GTVTRH) and Asn330 each bind NADP(+).

This sequence belongs to the isocitrate and isopropylmalate dehydrogenases family. The cofactor is Mg(2+). Mn(2+) is required as a cofactor.

The protein localises to the peroxisome. The enzyme catalyses D-threo-isocitrate + NADP(+) = 2-oxoglutarate + CO2 + NADPH. In terms of biological role, may play a role in N-alkane metabolism, glutamate synthesis, and/or NADPH generation in the peroxisomes. The chain is Isocitrate dehydrogenase [NADP] peroxisomal (IDP2) from Candida tropicalis (Yeast).